The primary structure comprises 490 residues: Histone-lysine N-methyltransferase SMYD1 (490 aa).

The 247-residue stretch at 7–253 folds into the SET domain; sequence ENVEVFTAEG…EGEELTVSYI (247 aa). Residue 17-19 participates in S-adenosyl-L-methionine binding; that stretch reads KGR. The Zn(2+) site is built by cysteine 52, cysteine 55, cysteine 65, cysteine 68, cysteine 74, cysteine 78, histidine 86, and cysteine 90. The MYND-type zinc-finger motif lies at 52–90; sequence CHTCFKRQEKLHRCGQCKFAHYCDRTCQKDAWLNHKNEC. S-adenosyl-L-methionine contacts are provided by residues histidine 135 and 205–206; that span reads NH. Cysteine 208 is a binding site for Zn(2+). Residue 270–272 participates in S-adenosyl-L-methionine binding; the sequence is YYF. Zn(2+)-binding residues include cysteine 274, cysteine 276, and cysteine 279.

The protein belongs to the class V-like SAM-binding methyltransferase superfamily. Interacts with HDAC1, HDAC2 and HDAC3. Interacts (via MYND-type zinc finger) with NACA isoform skNAC. Expression seems mostly restricted to heart and skeletal muscle.

The protein localises to the cytoplasm. It localises to the nucleus. The enzyme catalyses L-lysyl(4)-[histone H3] + 3 S-adenosyl-L-methionine = N(6),N(6),N(6)-trimethyl-L-lysyl(4)-[histone H3] + 3 S-adenosyl-L-homocysteine + 3 H(+). In terms of biological role, methylates histone H3 at 'Lys-4' (H3K4me), seems able to perform both mono-, di-, and trimethylation. Acts as a transcriptional repressor. Essential for cardiomyocyte differentiation and cardiac morphogenesis. This Homo sapiens (Human) protein is Histone-lysine N-methyltransferase SMYD1 (SMYD1).